The sequence spans 257 residues: 5'-nucleotidase SurE (257 aa).

A divalent metal cation-binding residues include Asp-8, Asp-9, Ser-40, and Asn-92.

It belongs to the SurE nucleotidase family. Requires a divalent metal cation as cofactor.

The protein localises to the cytoplasm. The enzyme catalyses a ribonucleoside 5'-phosphate + H2O = a ribonucleoside + phosphate. Its function is as follows. Nucleotidase that shows phosphatase activity on nucleoside 5'-monophosphates. This Rhizobium etli (strain ATCC 51251 / DSM 11541 / JCM 21823 / NBRC 15573 / CFN 42) protein is 5'-nucleotidase SurE.